The sequence spans 521 residues: Cytochrome P450 monooxygenase ABA2 (521 aa).

The chain crosses the membrane as a helical span at residues 15–35 (AGHLGMAVTFTILVAFTIHVL). Asn366 carries an N-linked (GlcNAc...) asparagine glycan. Position 458 (Cys458) interacts with heme.

This sequence belongs to the cytochrome P450 family. It depends on heme as a cofactor.

It localises to the membrane. It functions in the pathway hormone biosynthesis. Functionally, cytochrome P450 monooxygenase involved in the biosynthesis of abscisic acid (ABA), a phytohormone that acts antagonistically toward salicylic acid (SA), jasmonic acid (JA) and ethylene (ETH) signaling, to impede plant defense responses. During pathogen-host interaction, ABA plays a dual role in disease severity by increasing plant susceptibility and accelerating pathogenesis in the fungus itself. The first step of the pathway catalyzes the reaction from farnesyl diphosphate to alpha-ionylideneethane performed by the alpha-ionylideneethane synthase ABA3 via a three-step reaction mechanism involving 2 neutral intermediates, beta-farnesene and allofarnesene. The cytochrome P450 monooxygenase ABA1 might then be involved in the conversion of alpha-ionylideneethane to alpha-ionylideneacetic acid. Alpha-ionylideneacetic acid is further converted to abscisic acid in 2 steps involving the cytochrome P450 monooxygenase ABA2 and the short-chain dehydrogenase/reductase ABA4, via the intermediates 1'-deoxy-ABA or 1',4'-trans-diol-ABA, depending on the order of action of these 2 enzymes. ABA2 is responsible for the hydroxylation of carbon atom C-1' and ABA4 might be involved in the oxidation of the C-4' carbon atom. The chain is Cytochrome P450 monooxygenase ABA2 from Pyricularia oryzae (strain 70-15 / ATCC MYA-4617 / FGSC 8958) (Rice blast fungus).